A 217-amino-acid chain; its full sequence is UPF0502 protein Smlt0097 (217 aa).

Belongs to the UPF0502 family.

The protein is UPF0502 protein Smlt0097 of Stenotrophomonas maltophilia (strain K279a).